A 100-amino-acid chain; its full sequence is Small ribosomal subunit protein uS14c (100 aa).

Belongs to the universal ribosomal protein uS14 family. Part of the 30S ribosomal subunit.

The protein localises to the plastid. Its subcellular location is the chloroplast. Binds 16S rRNA, required for the assembly of 30S particles. This Cicer arietinum (Chickpea) protein is Small ribosomal subunit protein uS14c.